The chain runs to 494 residues: MSRFDGRAADPGSYRDRRSEGAFGGGTRAFAPTSKADSAAAAADLDGLPRFEKNFYVESPSVAGMTEEEVEAYRRRREITVEGRDVPKPVREFRDVGFPEYVLQEITKAGFVEPTPIQSQGWPMALRGRDLIGIAETGSGKTLAYLLPAIVHVNAQPILAPGDGPIVLVLAPTRELAVQIQQEATKFGASSKIKSTCIYGGVPKGPQVRDLQKGVEIVIATPGRLIDMIESHHTNLRRVTYLVLDEADRMLDMGFEPQIKKIVSQIRPDRQTLYWSATWPKEVEQLARNFLFDPYKVIIGSEELKANHAISQHVEILSESQKYNKLVNLLEDIMDGSRILIFMDTKKGCDQITRQLRMDGWPALSIHGDKSQAERDWVLSEFKSGKSPIMTATDVAARGLDVKDVKYVINYDFPGSLEDYVHRIGRTGRAGAKGTAYTFFTAANARFAKDLINILEEAGQKVSPELANMGRGAPPPSSGHRDRYRGYGGGRSWS.

The span at 1-20 (MSRFDGRAADPGSYRDRRSE) shows a compositional bias: basic and acidic residues. Positions 1 to 39 (MSRFDGRAADPGSYRDRRSEGAFGGGTRAFAPTSKADSA) are disordered. Over residues 29 to 39 (AFAPTSKADSA) the composition is skewed to low complexity. The Q motif signature appears at 91–119 (REFRDVGFPEYVLQEITKAGFVEPTPIQS). The Helicase ATP-binding domain occupies 122-297 (WPMALRGRDL…RNFLFDPYKV (176 aa)). 135 to 142 (AETGSGKT) provides a ligand contact to ATP. The DEAD box signature appears at 245–248 (DEAD). A Helicase C-terminal domain is found at 325–470 (KLVNLLEDIM…KVSPELANMG (146 aa)). A disordered region spans residues 465-494 (ELANMGRGAPPPSSGHRDRYRGYGGGRSWS).

It belongs to the DEAD box helicase family. DDX5/DBP2 subfamily.

The protein localises to the nucleus. The catalysed reaction is ATP + H2O = ADP + phosphate + H(+). In terms of biological role, ATP-dependent RNA helicase involved nonsense-mediated mRNA decay and ribosome biogenesis through rRNA processing. The chain is DEAD-box ATP-dependent RNA helicase 20 from Oryza sativa subsp. japonica (Rice).